We begin with the raw amino-acid sequence, 396 residues long: Cell adhesion molecule 3 (396 aa).

The first 22 residues, 1–22, serve as a signal peptide directing secretion; that stretch reads MGAPSALPLLLLLACSWAPGGA. The Ig-like V-type domain occupies 23–124; sequence NLSQDDSQPW…VRTAKSLVTV (102 aa). The Extracellular portion of the chain corresponds to 23–328; the sequence is NLSQDDSQPW…PVPSSSSTYH (306 aa). 3 cysteine pairs are disulfide-bonded: Cys-48–Cys-108, Cys-150–Cys-207, and Cys-252–Cys-297. Ig-like C2-type domains lie at 128–226 and 231–313; these read PQKP…QRIE and PTAM…FTLN. N-linked (GlcNAc...) asparagine glycosylation occurs at Asn-288. The chain crosses the membrane as a helical span at residues 329–349; it reads AIIGGIVAFIVFLLLILLIFL. The Cytoplasmic segment spans residues 350 to 396; it reads GHYLIRHKGTYLTHEAKGSDDAPDADTAIINAEGGQSGGDDKKEYFI. The tract at residues 365–396 is disordered; sequence AKGSDDAPDADTAIINAEGGQSGGDDKKEYFI. The residue at position 386 (Ser-386) is a Phosphoserine.

This sequence belongs to the nectin family. As to quaternary structure, homodimer. Can form trans-heterodimers with NECTIN3. Interacts with EPB41L1, DLG3, PALS2 and CASK.

Its subcellular location is the cell membrane. It is found in the cell junction. Its function is as follows. Involved in cell-cell adhesion. Has both calcium-independent homophilic cell-cell adhesion activity and calcium-independent heterophilic cell-cell adhesion activity with IGSF4, NECTIN1 and NECTIN3. Interaction with EPB41L1 may regulate structure or function of cell-cell junctions. The protein is Cell adhesion molecule 3 (Cadm3) of Rattus norvegicus (Rat).